A 499-amino-acid polypeptide reads, in one-letter code: Fumarate hydratase 2 (499 aa).

Residues 19 to 51 (ADVTLKQEDEQQERRSYSTPFREERDTFGPIQV) form a disordered region. The span at 23–45 (LKQEDEQQERRSYSTPFREERDT) shows a compositional bias: basic and acidic residues. Substrate contacts are provided by residues 134–136 (SGT), 164–167 (HPND), 174–176 (SSN), and Thr222. The active-site Proton donor/acceptor is the His223. Ser353 is an active-site residue. Substrate contacts are provided by residues Ser354 and 359-361 (KVN).

Belongs to the class-II fumarase/aspartase family. Fumarase subfamily. Homotetramer.

Its subcellular location is the cytoplasm. The protein resides in the cytosol. It carries out the reaction (S)-malate = fumarate + H2O. Fumarate hydratase activity (fumarate to L-malate) is strongly inhibited by phosphoenolpyruvate, citrate, oxaloacetate, ATP and ADP. Malate dehydratase activity (malate to fumarate) is activated by oxaloacetate, Asn and Gln. Malate dehydratase activity (malate to fumarate) is inhibited by citrate, succinate, ADP and ATP. Functionally, cytosolic fumarate hydratase that catalyzes the reversible stereospecific interconversion of fumarate to L-malate. Catalyzes the dehydration of L-malate to fumarate in the cytosol: required for the massive fumarate accumulation during the day in plants grown under high nitrogen. Also required for acclimation of photosynthesis to cold: acts by mediating accumulation of fumarate at low temperature, leading to reduce accumulation of phosphorylated sugars. The sequence is that of Fumarate hydratase 2 from Arabidopsis thaliana (Mouse-ear cress).